Here is a 205-residue protein sequence, read N- to C-terminus: Ras-related protein RABB1a (205 aa).

13-20 contributes to the GTP binding site; sequence GDTGVGKS. The short motif at 35-43 is the Effector region element; sequence HDLTIGVEF. GTP-binding positions include 61-65, 119-122, and 149-150; these read DTAGQ, NKCD, and SA. The segment at 179–205 is disordered; sequence ANEPGITPGPFGGKDASSSQQRRGCCG. The span at 194–205 shows a compositional bias: polar residues; it reads ASSSQQRRGCCG. S-geranylgeranyl cysteine attachment occurs at residues Cys-203 and Cys-204.

It belongs to the small GTPase superfamily. Rab family.

It is found in the cell membrane. Intracellular vesicle trafficking and protein transport. This Arabidopsis thaliana (Mouse-ear cress) protein is Ras-related protein RABB1a (RABB1A).